The primary structure comprises 67 residues: Large ribosomal subunit protein bL35 (67 aa).

Positions 1–32 (MPKLKNHSGAKKRFAKTATGKYKRRKAGRKHL) are enriched in basic residues. Residues 1–54 (MPKLKNHSGAKKRFAKTATGKYKRRKAGRKHLLTPQSGSRKREMRQTGIIKPES) are disordered.

It belongs to the bacterial ribosomal protein bL35 family.

This is Large ribosomal subunit protein bL35 from Elusimicrobium minutum (strain Pei191).